We begin with the raw amino-acid sequence, 154 residues long: 6,7-dimethyl-8-ribityllumazine synthase (154 aa).

5-amino-6-(D-ribitylamino)uracil contacts are provided by residues tryptophan 22, 56-58 (SHE), and 80-82 (AVI). 85–86 (DT) lines the (2S)-2-hydroxy-3-oxobutyl phosphate pocket. Catalysis depends on histidine 88, which acts as the Proton donor. Phenylalanine 113 is a binding site for 5-amino-6-(D-ribitylamino)uracil. Arginine 127 contributes to the (2S)-2-hydroxy-3-oxobutyl phosphate binding site.

The protein belongs to the DMRL synthase family.

The catalysed reaction is (2S)-2-hydroxy-3-oxobutyl phosphate + 5-amino-6-(D-ribitylamino)uracil = 6,7-dimethyl-8-(1-D-ribityl)lumazine + phosphate + 2 H2O + H(+). It functions in the pathway cofactor biosynthesis; riboflavin biosynthesis; riboflavin from 2-hydroxy-3-oxobutyl phosphate and 5-amino-6-(D-ribitylamino)uracil: step 1/2. Catalyzes the formation of 6,7-dimethyl-8-ribityllumazine by condensation of 5-amino-6-(D-ribitylamino)uracil with 3,4-dihydroxy-2-butanone 4-phosphate. This is the penultimate step in the biosynthesis of riboflavin. In Deinococcus geothermalis (strain DSM 11300 / CIP 105573 / AG-3a), this protein is 6,7-dimethyl-8-ribityllumazine synthase.